Here is a 457-residue protein sequence, read N- to C-terminus: Argininosuccinate lyase (457 aa).

It belongs to the lyase 1 family. Argininosuccinate lyase subfamily.

It is found in the cytoplasm. It catalyses the reaction 2-(N(omega)-L-arginino)succinate = fumarate + L-arginine. The protein operates within amino-acid biosynthesis; L-arginine biosynthesis; L-arginine from L-ornithine and carbamoyl phosphate: step 3/3. This is Argininosuccinate lyase from Haemophilus influenzae (strain PittEE).